Consider the following 215-residue polypeptide: Large ribosomal subunit protein uL3c (215 aa).

The disordered stretch occupies residues 132 to 151 (RGAMSHGSKSHRRPGSIGAG).

The protein belongs to the universal ribosomal protein uL3 family. As to quaternary structure, part of the 50S ribosomal subunit.

The protein resides in the plastid. It is found in the chloroplast. In terms of biological role, one of the primary rRNA binding proteins, it binds directly near the 3'-end of the 23S rRNA, where it nucleates assembly of the 50S subunit. This is Large ribosomal subunit protein uL3c (rpl3) from Cyanidium caldarium (Red alga).